A 611-amino-acid polypeptide reads, in one-letter code: DNA mismatch repair protein MutL (611 aa).

The protein belongs to the DNA mismatch repair MutL/HexB family.

In terms of biological role, this protein is involved in the repair of mismatches in DNA. It is required for dam-dependent methyl-directed DNA mismatch repair. May act as a 'molecular matchmaker', a protein that promotes the formation of a stable complex between two or more DNA-binding proteins in an ATP-dependent manner without itself being part of a final effector complex. In Bartonella bacilliformis (strain ATCC 35685 / KC583 / Herrer 020/F12,63), this protein is DNA mismatch repair protein MutL.